Reading from the N-terminus, the 461-residue chain is tRNA-2-methylthio-N(6)-dimethylallyladenosine synthase (461 aa).

Positions 18-134 constitute an MTTase N-terminal domain; the sequence is KHIYIQTLGC…LPDFISRIEK (117 aa). [4Fe-4S] cluster is bound by residues cysteine 27, cysteine 63, cysteine 97, cysteine 172, cysteine 176, and cysteine 179. The Radical SAM core domain maps to 158–388; that stretch reads CNGQVSSFVT…QALQEQHTLE (231 aa). The TRAM domain maps to 391–454; it reads KAMEGKQEDV…LHSLRGEMLC (64 aa).

This sequence belongs to the methylthiotransferase family. MiaB subfamily. In terms of assembly, monomer. [4Fe-4S] cluster is required as a cofactor.

Its subcellular location is the cytoplasm. The catalysed reaction is N(6)-dimethylallyladenosine(37) in tRNA + (sulfur carrier)-SH + AH2 + 2 S-adenosyl-L-methionine = 2-methylsulfanyl-N(6)-dimethylallyladenosine(37) in tRNA + (sulfur carrier)-H + 5'-deoxyadenosine + L-methionine + A + S-adenosyl-L-homocysteine + 2 H(+). In terms of biological role, catalyzes the methylthiolation of N6-(dimethylallyl)adenosine (i(6)A), leading to the formation of 2-methylthio-N6-(dimethylallyl)adenosine (ms(2)i(6)A) at position 37 in tRNAs that read codons beginning with uridine. The protein is tRNA-2-methylthio-N(6)-dimethylallyladenosine synthase of Syntrophus aciditrophicus (strain SB).